Reading from the N-terminus, the 173-residue chain is Photosystem I assembly protein Ycf3 (173 aa).

TPR repeat units lie at residues 35 to 68 (AFVY…EENP), 72 to 105 (SYIL…NPKM), and 120 to 153 (GEKA…APNN).

It belongs to the Ycf3 family.

It localises to the cellular thylakoid membrane. Its function is as follows. Essential for the assembly of the photosystem I (PSI) complex. May act as a chaperone-like factor to guide the assembly of the PSI subunits. This Synechocystis sp. (strain ATCC 27184 / PCC 6803 / Kazusa) protein is Photosystem I assembly protein Ycf3.